The primary structure comprises 402 residues: Argininosuccinate synthase (402 aa).

An ATP-binding site is contributed by 9 to 17; it reads AYSGGLDTS. Tyr-87 contacts L-citrulline. Gly-117 serves as a coordination point for ATP. L-aspartate-binding residues include Thr-119, Asn-123, and Asp-124. Asn-123 is an L-citrulline binding site. Positions 127, 176, 185, 261, and 273 each coordinate L-citrulline.

Belongs to the argininosuccinate synthase family. Type 1 subfamily. As to quaternary structure, homotetramer.

It localises to the cytoplasm. It carries out the reaction L-citrulline + L-aspartate + ATP = 2-(N(omega)-L-arginino)succinate + AMP + diphosphate + H(+). The protein operates within amino-acid biosynthesis; L-arginine biosynthesis; L-arginine from L-ornithine and carbamoyl phosphate: step 2/3. The sequence is that of Argininosuccinate synthase from Chlorobium phaeobacteroides (strain BS1).